Reading from the N-terminus, the 441-residue chain is Protein kinase C and casein kinase substrate in neurons protein 1 (441 aa).

Residues Ser-2 and Ser-76 each carry the phosphoserine modification. Positions 10-280 (EEITDSFWEV…AIRGADAQED (271 aa)) constitute an F-BAR domain. Positions 23-272 (KRTVKRIDDG…HVYRELEQAI (250 aa)) form a coiled coil. Thr-181 is subject to Phosphothreonine. Residues 310–380 (AAKKEKQPKK…ANGGANPFED (71 aa)) form a disordered region. Over residues 311 to 321 (AKKEKQPKKAE) the composition is skewed to basic and acidic residues. Over residues 326 to 348 (SNATGAVESTSQAGDRGSVSSYD) the composition is skewed to polar residues. 5 positions are modified to phosphoserine: Ser-343, Ser-345, Ser-346, Ser-358, and Ser-362. The SH3 domain occupies 382–441 (AKGVRVRALYDYDGQEQDELSFKAGDELTKLGEEDEQGWCRGRLDSGQLGLYPANYVEAI). Tyr-391 carries the phosphotyrosine modification. 2 positions are modified to phosphoserine: Ser-402 and Ser-427.

It belongs to the PACSIN family. As to quaternary structure, homodimer. May form heterooligomers with other PACSINs. Interacts with MAPT. Interacts with TRPV4. Interacts (via SH3 domain) with SYNJ1 and WASL. Interacts (via SH3 domain) with DNM1; the interaction is reduced by DNM1 phosphorylation. Interacts with DNM2 and DNM3. Interacts with both COBL and DBNL. Identified in a complex composed of COBL, PACSIN1 and WASL. Interacts with EHD1 and EHD3. Post-translationally, phosphorylated by casein kinase 2 (CK2) and protein kinase C (PKC). Highly expressed in brain (at protein level).

The protein resides in the cytoplasm. Its subcellular location is the cell projection. The protein localises to the synapse. It localises to the synaptosome. It is found in the ruffle membrane. The protein resides in the membrane. Its subcellular location is the cytoplasmic vesicle membrane. The protein localises to the cytosol. It localises to the cell membrane. Binds to membranes via its F-BAR domain and mediates membrane tubulation. Plays a role in the reorganization of the microtubule cytoskeleton via its interaction with MAPT; this decreases microtubule stability and inhibits MAPT-induced microtubule polymerization. Plays a role in cellular transport processes by recruiting DNM1, DNM2 and DNM3 to membranes. Plays a role in the reorganization of the actin cytoskeleton and in neuron morphogenesis via its interaction with COBL and WASL, and by recruiting COBL to the cell cortex. Plays a role in the regulation of neurite formation, neurite branching and the regulation of neurite length. Required for normal synaptic vesicle endocytosis; this process retrieves previously released neurotransmitters to accommodate multiple cycles of neurotransmission. Required for normal excitatory and inhibitory synaptic transmission. The chain is Protein kinase C and casein kinase substrate in neurons protein 1 (Pacsin1) from Rattus norvegicus (Rat).